Here is a 798-residue protein sequence, read N- to C-terminus: Protocadherin beta-13 (798 aa).

Residues 1-28 (MEASGKLICRQRQVLFSFLLLGLSLAGA) form the signal peptide. The Extracellular segment spans residues 29 to 690 (AEPRSYSVVE…AQADSLTVYL (662 aa)). 5 Cadherin domains span residues 36 to 134 (VVEE…SPVF), 139 to 243 (MLVK…APEF), 248 to 348 (YRVQ…APEV), 353 to 451 (FTSP…APAF), and 456 to 561 (YTLF…SPFV). Residues N418 and N436 are each glycosylated (N-linked (GlcNAc...) asparagine). N-linked (GlcNAc...) asparagine glycosylation occurs at N567. The Cadherin 6 domain maps to 568–671 (GSAPCTELVP…LVDGFSQPYL (104 aa)). The chain crosses the membrane as a helical span at residues 691-711 (VVALASVSSLFLFSVLLFVAV). The Cytoplasmic portion of the chain corresponds to 712–798 (RLCRRSRAAS…FPNNFGFNIQ (87 aa)).

Its subcellular location is the cell membrane. Functionally, potential calcium-dependent cell-adhesion protein. May be involved in the establishment and maintenance of specific neuronal connections in the brain. The chain is Protocadherin beta-13 (PCDHB13) from Pan troglodytes (Chimpanzee).